The chain runs to 101 residues: Ferredoxin-3 (101 aa).

4Fe-4S ferredoxin-type domains follow at residues 17–46 and 70–100; these read YLMKIDEQKCIGCGRCFKVCGRDVMSLHGL and KVMALTGAENCIGCGACARVCPSECQTHAAL. Residues cysteine 26, cysteine 29, cysteine 32, cysteine 36, cysteine 80, cysteine 83, cysteine 86, and cysteine 90 each coordinate [4Fe-4S] cluster.

Homodimer. The cofactor is [4Fe-4S] cluster.

In terms of biological role, ferredoxins are iron-sulfur proteins that transfer electrons in a wide variety of metabolic reactions. The chain is Ferredoxin-3 (fdxB) from Rhodobacter capsulatus (Rhodopseudomonas capsulata).